Consider the following 353-residue polypeptide: Survival factor 2 (353 aa).

It belongs to the SVF1 family.

Its subcellular location is the cytoplasm. It localises to the nucleus. The protein is Survival factor 2 (svf2) of Schizosaccharomyces pombe (strain 972 / ATCC 24843) (Fission yeast).